We begin with the raw amino-acid sequence, 361 residues long: Chorismate synthase (361 aa).

Residues Arg48 and Arg54 each coordinate NADP(+). FMN-binding positions include Arg125–Ser127, Asn238–Ala239, Gly278, Lys293–Ser297, and Arg319.

Belongs to the chorismate synthase family. Homotetramer. FMNH2 is required as a cofactor.

The enzyme catalyses 5-O-(1-carboxyvinyl)-3-phosphoshikimate = chorismate + phosphate. The protein operates within metabolic intermediate biosynthesis; chorismate biosynthesis; chorismate from D-erythrose 4-phosphate and phosphoenolpyruvate: step 7/7. Its function is as follows. Catalyzes the anti-1,4-elimination of the C-3 phosphate and the C-6 proR hydrogen from 5-enolpyruvylshikimate-3-phosphate (EPSP) to yield chorismate, which is the branch point compound that serves as the starting substrate for the three terminal pathways of aromatic amino acid biosynthesis. This reaction introduces a second double bond into the aromatic ring system. This chain is Chorismate synthase, found in Klebsiella pneumoniae subsp. pneumoniae (strain ATCC 700721 / MGH 78578).